The primary structure comprises 553 residues: Glycine betaine/proline/choline transporter VP1723 (553 aa).

Transmembrane regions (helical) follow at residues 43-63 (NRVFAISGMAIVLFVVATLTF), 85-105 (FFLASGNVFVIVCLVLIVTPL), 122-142 (AGWLAMLFAAGMGIGLVFFGV), 191-211 (WALHPWSIYALLALGLAIFSF), 231-251 (VWGWVGHIIDILAVVATVFGL), 278-298 (TQVVLIVVITALALISVVAGL), 310-330 (MILAAMLLFFVIIVGPTMAIL), 362-382 (WTAFYWAWWISWSPFVGMFIA), 393-413 (FIICVILIPSTVCVLWMTAFG), 443-463 (VMPFAEITSVVGIILVVVFFI), 490-510 (VFWCTFEGLVAIALMLGGGLA), and 515-535 (MAVTTGLPFTIVLLVATVSLI).

Belongs to the BCCT transporter (TC 2.A.15) family.

The protein resides in the cell inner membrane. In terms of biological role, involved in the uptake of osmoprotectants. Can transport glycine betaine, proline and choline. The protein is Glycine betaine/proline/choline transporter VP1723 of Vibrio parahaemolyticus serotype O3:K6 (strain RIMD 2210633).